The primary structure comprises 395 residues: E3 ubiquitin-protein ligase RNFT1 (395 aa).

Disordered regions lie at residues 1-58 (MQAS…SSRN) and 78-97 (YSHS…GEHG). Transmembrane regions (helical) follow at residues 118 to 138 (ILIL…LGIG), 165 to 185 (CAWL…TFHS), 193 to 213 (IFLN…IVGI), 216 to 236 (FILK…PSFI), 258 to 278 (IFVP…FGNV), and 283 to 303 (LGIL…FGHL). Residues 328–379 (CSDMDGICTICQAEFQKPVLLFCQHIFCEECITLWFNREKTCPLCRTVISEC) form a required for ubiquitin ligase activity and for protection against ER stress-induced cell death region. The RING-type zinc finger occupies 335-373 (CTICQAEFQKPVLLFCQHIFCEECITLWFNREKTCPLCR).

In terms of tissue distribution, predominantly expressed in testis.

It is found in the early endosome membrane. The enzyme catalyses S-ubiquitinyl-[E2 ubiquitin-conjugating enzyme]-L-cysteine + [acceptor protein]-L-lysine = [E2 ubiquitin-conjugating enzyme]-L-cysteine + N(6)-ubiquitinyl-[acceptor protein]-L-lysine.. It participates in protein modification; protein ubiquitination. Functionally, E3 ubiquitin-protein ligase that acts in the endoplasmic reticulum (ER)-associated degradation (ERAD) pathway, which targets misfolded proteins that accumulate in the endoplasmic reticulum (ER) for ubiquitination and subsequent proteasome-mediated degradation. Protects cells from ER stress-induced apoptosis. The sequence is that of E3 ubiquitin-protein ligase RNFT1 (Rnft1) from Mus musculus (Mouse).